Here is a 185-residue protein sequence, read N- to C-terminus: MVNPFIKEAKEKMKRTLEKIEDELRKMRTGKPSPAILEEIKVDYYGVPTPVNQLATISISEERTLVIKPWDKSVLSLIEKAINASDLGLNPINDGNVIRLVFPSPTTEQREKWVKKAKEIVEEGKIAIRNIRREILKKIKEDQKEGLIPEDDAKRLENEIQKLTDEFIEKLDEVFEIKKEEIMEF.

It belongs to the RRF family.

It localises to the cytoplasm. Functionally, responsible for the release of ribosomes from messenger RNA at the termination of protein biosynthesis. May increase the efficiency of translation by recycling ribosomes from one round of translation to another. The sequence is that of Ribosome-recycling factor from Thermotoga sp. (strain RQ2).